We begin with the raw amino-acid sequence, 220 residues long: Ribose-5-phosphate isomerase A (220 aa).

Substrate contacts are provided by residues threonine 28 to threonine 31, aspartate 81 to aspartate 84, and lysine 94 to glycine 97. The Proton acceptor role is filled by glutamate 103. Residue lysine 121 coordinates substrate.

This sequence belongs to the ribose 5-phosphate isomerase family. In terms of assembly, homodimer.

The enzyme catalyses aldehydo-D-ribose 5-phosphate = D-ribulose 5-phosphate. Its pathway is carbohydrate degradation; pentose phosphate pathway; D-ribose 5-phosphate from D-ribulose 5-phosphate (non-oxidative stage): step 1/1. Functionally, catalyzes the reversible conversion of ribose-5-phosphate to ribulose 5-phosphate. The protein is Ribose-5-phosphate isomerase A of Shewanella baltica (strain OS223).